The following is a 198-amino-acid chain: MERLTGRNVALLVLCLCAGYALVFAEGEKEIPVTKFGQNIAPTMTFLYCYSCGYRKAFEDYVGLLGEKYPQIQVNGGNYDPPGLNYYLSKMIFALKIIIIVSVVSAVSPFTFLGLNTPSWWSHMQANKIYACMMIFFLGNMLEAQLISSGAFEITLNDVPVWSKLQTGRFPSPEVLFQIIDNHLQFTEKVQENPDFVK.

The N-terminal stretch at 1–25 (MERLTGRNVALLVLCLCAGYALVFA) is a signal peptide. A disulfide bridge links Cys49 with Cys52.

Belongs to the SelWTH family. SELT subfamily.

The enzyme catalyses [thioredoxin]-dithiol + NADP(+) = [thioredoxin]-disulfide + NADPH + H(+). In terms of biological role, probably has thioredoxin reductase-like oxidoreductase activity. The polypeptide is Thioredoxin reductase-like selenoprotein T homolog CG3887 (Drosophila melanogaster (Fruit fly)).